The sequence spans 591 residues: V-type ATP synthase alpha chain (591 aa).

ATP is bound at residue 242-249 (GPFGAGKT).

The protein belongs to the ATPase alpha/beta chains family.

The enzyme catalyses ATP + H2O + 4 H(+)(in) = ADP + phosphate + 5 H(+)(out). Produces ATP from ADP in the presence of a proton gradient across the membrane. The V-type alpha chain is a catalytic subunit. This is V-type ATP synthase alpha chain from Chlamydia abortus (strain DSM 27085 / S26/3) (Chlamydophila abortus).